Reading from the N-terminus, the 538-residue chain is Cytochrome P450 monooxygenase claM (538 aa).

The chain crosses the membrane as a helical span at residues 36 to 56; sequence LSIGLVVLIGAISSFLLQQFL. N-linked (GlcNAc...) asparagine glycans are attached at residues asparagine 306 and asparagine 425. Heme is bound at residue cysteine 472.

Belongs to the cytochrome P450 family. It depends on heme as a cofactor.

The protein localises to the membrane. It catalyses the reaction 2 nataloe emodin + reduced [NADPH--hemoprotein reductase] + O2 = cladofulvin + oxidized [NADPH--hemoprotein reductase] + 2 H2O + H(+). The protein operates within pigment biosynthesis. Functionally, cytochrome P450 monooxygenase; part of the gene cluster that mediates the biosynthesis of the bianthraquinone cladofulvin, a conidial pigment not required for virulence but that plays a role in fitness and resistance to environmental stresses including UV light and low-temperature stress. The pathway begins with the synthesis of atrochrysone thioester by the polyketide synthase (PKS) claG. The atrochrysone carboxyl ACP thioesterase claF then breaks the thioester bond and releases the atrochrysone carboxylic acid from claG. This compound is decarboxylated by claH to yield emodin, which is further converted to chrysophanol hydroquinone by the reductase claC and the dehydratase claB. The cytochrome monooxygenase P450 claM then catalyzes the dimerization of nataloe-emodin to cladofulvin. This chain is Cytochrome P450 monooxygenase claM, found in Passalora fulva (Tomato leaf mold).